A 318-amino-acid polypeptide reads, in one-letter code: Receptor homology region, transmembrane domain- and RING domain-containing protein 6 (318 aa).

The N-terminal stretch at 1-20 is a signal peptide; it reads MNGSWITILSLLVISQLASS. Residues 22–162 are Lumenal-facing; that stretch reads VTLIGKNTFL…LIPGFGISSW (141 aa). An intrachain disulfide couples cysteine 62 to cysteine 87. Positions 70–143 constitute a PA domain; that stretch reads EKGSKFRPSY…RTSGEVLKEY (74 aa). Asparagine 121 carries an N-linked (GlcNAc...) asparagine glycan. The helical transmembrane segment at 163–183 threads the bilayer; sequence SIMAITFVSLLVISAVLASYF. Residues 184–318 are Cytoplasmic-facing; that stretch reads SVRRHRIRQH…DLPIVVRVYL (135 aa). The segment at 233–275 adopts an RING-type; atypical zinc-finger fold; that stretch reads CAICIDDYRVGEILRILPCKHKYHAVCIDSWLGRCRSFCPVCK.

The protein resides in the prevacuolar compartment membrane. It localises to the protein storage vacuole membrane. Involved in the trafficking of vacuolar proteins. May function as a sorting receptor for protein trafficking to the protein storage vacuole (PSV). This chain is Receptor homology region, transmembrane domain- and RING domain-containing protein 6 (RMR6), found in Arabidopsis thaliana (Mouse-ear cress).